We begin with the raw amino-acid sequence, 131 residues long: Fumarate reductase subunit C (131 aa).

3 helical membrane passes run 30–50, 58–78, and 109–129; these read EGTC…VFAL, AGFV…VTLI, and IVRG…AVAL.

This sequence belongs to the FrdC family. In terms of assembly, part of an enzyme complex containing four subunits: a flavoprotein (FrdA), an iron-sulfur protein (FrdB), and two hydrophobic anchor proteins (FrdC and FrdD).

Its subcellular location is the cell inner membrane. Two distinct, membrane-bound, FAD-containing enzymes are responsible for the catalysis of fumarate and succinate interconversion; fumarate reductase is used in anaerobic growth, and succinate dehydrogenase is used in aerobic growth. Anchors the catalytic components of the fumarate reductase complex to the cell inner membrane, binds quinones. In Proteus mirabilis (strain HI4320), this protein is Fumarate reductase subunit C.